The primary structure comprises 104 residues: UPF0213 protein YsiG (104 aa).

Positions 2 to 79 constitute a GIY-YIG domain; that stretch reads NQYFTYILQC…KLVRKQKLSL (78 aa).

This sequence belongs to the UPF0213 family.

The polypeptide is UPF0213 protein YsiG (ysiG) (Lactococcus lactis subsp. lactis (strain IL1403) (Streptococcus lactis)).